We begin with the raw amino-acid sequence, 251 residues long: uncharacterized protein (251 aa).

This sequence to M.jannaschii MJ0638 and MJ1123 and M.tuberculosis Rv2003c.

This is an uncharacterized protein from Methanocaldococcus jannaschii (strain ATCC 43067 / DSM 2661 / JAL-1 / JCM 10045 / NBRC 100440) (Methanococcus jannaschii).